The chain runs to 1073 residues: Probable inorganic carbon transporter subunit DabA (1073 aa).

Residues cysteine 551, aspartate 553, histidine 742, and cysteine 757 each contribute to the Zn(2+) site.

It belongs to the inorganic carbon transporter (TC 9.A.2) DabA family. Forms a complex with DabB. It depends on Zn(2+) as a cofactor.

It localises to the cell inner membrane. Its function is as follows. Part of an energy-coupled inorganic carbon pump. This is Probable inorganic carbon transporter subunit DabA from Methylococcus capsulatus (strain ATCC 33009 / NCIMB 11132 / Bath).